Here is a 104-residue protein sequence, read N- to C-terminus: Large ribosomal subunit protein bL21 (104 aa).

It belongs to the bacterial ribosomal protein bL21 family. In terms of assembly, part of the 50S ribosomal subunit. Contacts protein L20.

Functionally, this protein binds to 23S rRNA in the presence of protein L20. In Clostridium botulinum (strain ATCC 19397 / Type A), this protein is Large ribosomal subunit protein bL21.